A 242-amino-acid chain; its full sequence is Large ribosomal subunit protein uL1 (242 aa).

This sequence belongs to the universal ribosomal protein uL1 family. Part of the 50S ribosomal subunit.

In terms of biological role, binds directly to 23S rRNA. The L1 stalk is quite mobile in the ribosome, and is involved in E site tRNA release. Functionally, protein L1 is also a translational repressor protein, it controls the translation of the L11 operon by binding to its mRNA. The protein is Large ribosomal subunit protein uL1 of Streptomyces sp. (strain FRI-5).